We begin with the raw amino-acid sequence, 131 residues long: Mesogenin-1 (131 aa).

The disordered stretch occupies residues E22–E79. The segment covering G27–P45 has biased composition (low complexity). Over residues P63–M73 the composition is skewed to basic residues. The bHLH domain occupies R70–L124.

Coexpression of ntl and spt is required for expression.

Its subcellular location is the nucleus. Functionally, involved in specifying the paraxial, but not dorsal, mesoderm. May regulate the expression of T-box transcription factors required for mesoderm formation and differentiation. This Danio rerio (Zebrafish) protein is Mesogenin-1 (msgn1).